We begin with the raw amino-acid sequence, 70 residues long: Large ribosomal subunit protein bL31 (70 aa).

Cys16, Cys18, Cys37, and Cys40 together coordinate Zn(2+).

The protein belongs to the bacterial ribosomal protein bL31 family. Type A subfamily. Part of the 50S ribosomal subunit. Zn(2+) serves as cofactor.

In terms of biological role, binds the 23S rRNA. The polypeptide is Large ribosomal subunit protein bL31 (Haemophilus influenzae (strain PittEE)).